Consider the following 172-residue polypeptide: MSKEKDVYLNEEIRASEVRCVGDDGTAYGVISRGEAQDIANRMGLDLVLIAPDAKPPVCKIMDYGKFRYQQEKKQKEAKKKQKVIEVKEIKLSVKIAQNDINYKIKHAQEFLEEGKHVKFRVFLKGREMATPDIGVVMLERIWELVKDYADRDKVPALEGRYVNMLVTPKKG.

It belongs to the IF-3 family. In terms of assembly, monomer.

Its subcellular location is the cytoplasm. IF-3 binds to the 30S ribosomal subunit and shifts the equilibrium between 70S ribosomes and their 50S and 30S subunits in favor of the free subunits, thus enhancing the availability of 30S subunits on which protein synthesis initiation begins. The protein is Translation initiation factor IF-3 of Campylobacter fetus subsp. fetus (strain 82-40).